We begin with the raw amino-acid sequence, 927 residues long: Non-lysosomal glucosylceramidase (927 aa).

A disordered region spans residues 32–62 (EETGGTKDVQVTDCKSPEDSRPPKETDCCNP). Positions 46-58 (KSPEDSRPPKETD) are enriched in basic and acidic residues.

It belongs to the non-lysosomal glucosylceramidase family. As to expression, widely expressed. Mainly expressed in brain, heart, skeletal muscle, kidney and placenta and expressed at lower levels in liver, spleen, small intestine and lung. Detectable in colon, thymus and peripheral blood leukocytes.

The protein resides in the endoplasmic reticulum membrane. Its subcellular location is the golgi apparatus membrane. The catalysed reaction is a beta-D-glucosyl-(1&lt;-&gt;1')-N-acylsphing-4-enine + H2O = an N-acylsphing-4-enine + D-glucose. It catalyses the reaction a beta-D-galactosyl-(1&lt;-&gt;1')-N-acylsphing-4-enine + H2O = an N-acylsphing-4-enine + D-galactose. The enzyme catalyses beta-D-glucosyl-(1-&gt;3)-O-lithocholate + H2O = lithocholate + D-glucose. It carries out the reaction beta-D-glucosyl-(1-&gt;3)-O-chenodeoxycholate + H2O = chenodeoxycholate + D-glucose. The catalysed reaction is a di-trans,poly-cis-dolichyl beta-D-glucosyl phosphate + chenodeoxycholate = beta-D-glucosyl-(1-&gt;3)-O-chenodeoxycholate + a di-trans,poly-cis-dolichyl phosphate + H(+). It catalyses the reaction octyl beta-D-glucose + chenodeoxycholate = beta-D-glucosyl-(1-&gt;3)-O-chenodeoxycholate + octan-1-ol. The enzyme catalyses cholesteryl 3-beta-D-glucoside + H2O = cholesterol + D-glucose. It carries out the reaction a beta-D-glucosyl-(1&lt;-&gt;1')-N-acylsphing-4-enine + cholesterol = cholesteryl 3-beta-D-glucoside + an N-acylsphing-4-enine. The catalysed reaction is beta-D-glucosyl-N-(9Z-octadecenoyl)-sphing-4E-enine + cholesterol = N-(9Z-octadecenoyl)-sphing-4-enine + cholesteryl 3-beta-D-glucoside. It catalyses the reaction a beta-D-galactosyl-(1&lt;-&gt;1')-N-acylsphing-4-enine + cholesterol = cholesteryl 3-beta-D-galactoside + an N-acylsphing-4-enine. The enzyme catalyses 1-(beta-D-galactosyl)-N-dodecanoylsphing-4-enine + cholesterol = cholesteryl 3-beta-D-galactoside + N-dodecanoylsphing-4-enine. It functions in the pathway lipid metabolism; sphingolipid metabolism. The protein operates within steroid metabolism; cholesterol metabolism. With respect to regulation, inhibited by AMP-DMN/N -((5-adamantane-1-yl-methoxy)pentyl)-deoxynojirimycin. Activated by Mn(2+), Co(2+) and Mg(2+) and inhibited by Zn(2+). Enzymatic activity is dependent on membrane association and requires the presence of lipids. The membrane-associated enzyme is not inhibited by condutiriol B epoxide and bromocondutiriol B epoxide. Non-lysosomal glucosylceramidase that catalyzes the hydrolysis of glucosylceramides/GlcCers (such as beta-D-glucosyl-(1&lt;-&gt;1')-N-acylsphing-4-enine) to free glucose and ceramides (such as N-acylsphing-4-enine). GlcCers are membrane glycosphingolipids that have a wide intracellular distribution. They are the main precursors of more complex glycosphingolipids that play a role in cellular growth, differentiation, adhesion, signaling, cytoskeletal dynamics and membrane properties. Involved in the transglucosylation of cholesterol, transfers glucose from GlcCer to cholesterol, thereby modifying its water solubility and biological properties. Under specific conditions, may catalyze the reverse reaction, transferring glucose from cholesteryl-3-beta-D-glucoside to ceramide (such as N-acylsphing-4-enine). May play a role in the metabolism of bile acids. Able to hydrolyze bile acid 3-O-glucosides as well as to produce bile acid-glucose conjugates thanks to a bile acid glucosyl transferase activity. Catalyzes the hydrolysis of galactosylceramides/GalCers (such as beta-D-galactosyl-(1&lt;-&gt;1')-N-acylsphing-4-enine), as well as the galactosyl transfer between GalCers and cholesterol in vitro with lower activity compared with their activity against GlcCers. The protein is Non-lysosomal glucosylceramidase of Homo sapiens (Human).